The primary structure comprises 890 residues: tRNase Z TRZ3, mitochondrial (890 aa).

The transit peptide at Met1–Ser44 directs the protein to the mitochondrion. A disordered region spans residues Ser46 to Ser67.

It belongs to the RNase Z family. In terms of assembly, homodimer. The cofactor is Zn(2+). Ca(2+) serves as cofactor. It depends on Mn(2+) as a cofactor. Requires Mg(2+) as cofactor.

Its subcellular location is the mitochondrion. It localises to the nucleus. The enzyme catalyses Endonucleolytic cleavage of RNA, removing extra 3' nucleotides from tRNA precursor, generating 3' termini of tRNAs. A 3'-hydroxy group is left at the tRNA terminus and a 5'-phosphoryl group is left at the trailer molecule.. In terms of biological role, zinc phosphodiesterase, which displays tRNA 3'-processing endonuclease activity. Involved in tRNA maturation, by removing a 3'-trailer from precursor tRNA. Can process the mitochondrial tRNA-like structures (t-elements). Involved in the processing of small nucleolar RNAs (snoRNAs). This Arabidopsis thaliana (Mouse-ear cress) protein is tRNase Z TRZ3, mitochondrial.